A 168-amino-acid polypeptide reads, in one-letter code: MKLTSKGRYAVTAMLDVALHSQQNPVPLADISERQGISLSYLEQLFSKLRKAGLVASVRGPGGGYRLGADAHSIAIGTVIAAVDESVDATKCQGKGDCQGGTRCLTHTLWRDLSSRISDFLNNITLGELMKDNEVLEISDRQDIDLAVTHGLSNKNTTAAPIGVNVRS.

The region spanning 2-131 (KLTSKGRYAV…NNITLGELMK (130 aa)) is the HTH rrf2-type domain. The segment at residues 28–51 (LADISERQGISLSYLEQLFSKLRK) is a DNA-binding region (H-T-H motif). [2Fe-2S] cluster is bound by residues Cys92, Cys98, and Cys104.

[2Fe-2S] cluster is required as a cofactor.

Regulates the transcription of several operons and genes involved in the biogenesis of Fe-S clusters and Fe-S-containing proteins. In Vibrio campbellii (strain ATCC BAA-1116), this protein is HTH-type transcriptional regulator IscR.